We begin with the raw amino-acid sequence, 38 residues long: AITCGQVSSALSSCLGYLKNGGAVPPGSSCGIKNLNSA.

This sequence belongs to the plant LTP family.

Its subcellular location is the secreted. Its function is as follows. Plant non-specific lipid-transfer proteins transfer phospholipids as well as galactolipids across membranes. May play a role in wax or cutin deposition in the cell walls of expanding epidermal cells and certain secretory tissues. The sequence is that of Non-specific lipid-transfer protein P2 from Vitis sp. (Grape).